A 139-amino-acid polypeptide reads, in one-letter code: D-ribose pyranase (139 aa).

Residue histidine 20 is the Proton donor of the active site. Residues aspartate 28, histidine 106, and 128–130 (YAN) each bind substrate.

Belongs to the RbsD / FucU family. RbsD subfamily. Homodecamer.

The protein localises to the cytoplasm. The catalysed reaction is beta-D-ribopyranose = beta-D-ribofuranose. It functions in the pathway carbohydrate metabolism; D-ribose degradation; D-ribose 5-phosphate from beta-D-ribopyranose: step 1/2. Its function is as follows. Catalyzes the interconversion of beta-pyran and beta-furan forms of D-ribose. In Vibrio vulnificus (strain CMCP6), this protein is D-ribose pyranase.